The chain runs to 141 residues: uncharacterized protein (141 aa).

Positions 1–61 (IRLLHSLTPP…PPPPPPPRRA (61 aa)) are disordered. The span at 8 to 58 (TPPPPPPPPPPPPPPPPPPPPPPPPPPPPPPPPPPPPPPPPPPPPPPPPPP) shows a compositional bias: pro residues. A DNA-binding region (H-T-H motif) is located at residues 98–116 (KRLLVAYPVRHFLSAACQF).

This is an uncharacterized protein from Owenia fusiformis (Polychaete worm).